Consider the following 72-residue polypeptide: Metallothionein-like protein 1B (72 aa).

It belongs to the metallothionein superfamily. Type 15 family. In terms of tissue distribution, expressed in leaves of mature plants.

Metallothioneins have a high content of cysteine residues that bind various heavy metals. Functions as a metal chelator of nickel (Ni), cadmium (Cd), zinc (Zn) and copper (Cu). Possesses higher affinity for Ni and Cd ions compared to Zn and Cu ions. This is Metallothionein-like protein 1B (MT1B) from Oryza sativa subsp. japonica (Rice).